The chain runs to 434 residues: Serine/threonine-protein kinase Sgk1-A (434 aa).

Positions 66–94 (PQEPELLNENSSPPPSPSQQINLGPSSNP) are disordered. A compositionally biased stretch (polar residues) spans 84-94 (QQINLGPSSNP). In terms of domain architecture, Protein kinase spans 101-358 (FQFLKIIGKG…FMEIKNHIFF (258 aa)). Residues 107-115 (IGKGSFGKV) and K130 contribute to the ATP site. The active-site Proton acceptor is D225. The region spanning 359-434 (SPINWDDLIN…SYAPPMESYL (76 aa)) is the AGC-kinase C-terminal domain.

It belongs to the protein kinase superfamily. AGC Ser/Thr protein kinase family.

It localises to the cytoplasm. It is found in the nucleus. Its subcellular location is the endoplasmic reticulum. It carries out the reaction L-seryl-[protein] + ATP = O-phospho-L-seryl-[protein] + ADP + H(+). It catalyses the reaction L-threonyl-[protein] + ATP = O-phospho-L-threonyl-[protein] + ADP + H(+). Its function is as follows. Protein kinase that may play an important role in cellular stress response. Plays an important role in activating certain potassium, sodium, and chloride channels, suggesting an involvement in the regulation of processes such as cell survival, neuronal excitability, and renal sodium excretion. This chain is Serine/threonine-protein kinase Sgk1-A (sgk1-a), found in Xenopus laevis (African clawed frog).